Reading from the N-terminus, the 142-residue chain is Large ribosomal subunit protein uL13 (142 aa).

The protein belongs to the universal ribosomal protein uL13 family. In terms of assembly, part of the 50S ribosomal subunit.

Its function is as follows. This protein is one of the early assembly proteins of the 50S ribosomal subunit, although it is not seen to bind rRNA by itself. It is important during the early stages of 50S assembly. The polypeptide is Large ribosomal subunit protein uL13 (Tolumonas auensis (strain DSM 9187 / NBRC 110442 / TA 4)).